We begin with the raw amino-acid sequence, 100 residues long: UPF0125 protein CV_3462 (100 aa).

This sequence belongs to the UPF0125 (RnfH) family.

The protein is UPF0125 protein CV_3462 of Chromobacterium violaceum (strain ATCC 12472 / DSM 30191 / JCM 1249 / CCUG 213 / NBRC 12614 / NCIMB 9131 / NCTC 9757 / MK).